A 337-amino-acid chain; its full sequence is Mitochondrial glutathione transporter SLC25A40 (337 aa).

Solcar repeat units lie at residues Val-14 to Phe-132, Asn-140 to Trp-224, and Ser-234 to Phe-328. 6 helical membrane-spanning segments follow: residues Met-20–Val-40, Leu-104–Thr-124, Ile-146–Ile-166, Trp-200–Leu-221, Phe-240–Val-260, and Gly-299–Ile-319.

Belongs to the mitochondrial carrier (TC 2.A.29) family. Widely expressed at low level.

Its subcellular location is the mitochondrion inner membrane. The enzyme catalyses glutathione(in) = glutathione(out). Probable mitochondrial transporter required for glutathione import into mitochondria. Glutathione, which plays key roles in oxidative metabolism, is produced exclusively in the cytosol and is imported in many organelles. Mitochondrial glutathione is required for the activity and stability of proteins containing iron-sulfur clusters, as well as erythropoiesis. The protein is Mitochondrial glutathione transporter SLC25A40 of Rattus norvegicus (Rat).